The chain runs to 40 residues: Trypsin inhibitor (40 aa).

Monomer.

It carries out the reaction Preferential cleavage: Arg-|-Xaa, Lys-|-Xaa.. In terms of biological role, inhibits trypsin but not chymotrypsin, papain or porcine pancreatic alpha-amylase. Has insecticidal activity against A.aegypti. Functions by inhibiting the A.aegypti midgut proteases to reduce the survival of larva and adults. This is Trypsin inhibitor from Cassia leiandra (Marimari).